We begin with the raw amino-acid sequence, 66 residues long: Large ribosomal subunit protein bL35 (66 aa).

Residues 1-16 (MPKQKTHRASAKRFKR) are compositionally biased toward basic residues. The tract at residues 1–21 (MPKQKTHRASAKRFKRTGSGG) is disordered.

The protein belongs to the bacterial ribosomal protein bL35 family.

This chain is Large ribosomal subunit protein bL35, found in Streptococcus agalactiae serotype Ia (strain ATCC 27591 / A909 / CDC SS700).